A 159-amino-acid polypeptide reads, in one-letter code: Phosphopantetheine adenylyltransferase (159 aa).

Thr10 is a substrate binding site. Residues 10–11 (TF) and His18 contribute to the ATP site. 3 residues coordinate substrate: Lys42, Met74, and Arg88. ATP is bound by residues 89 to 91 (GLR), Glu99, and 124 to 130 (WSFISSS).

The protein belongs to the bacterial CoaD family. In terms of assembly, homohexamer. Requires Mg(2+) as cofactor.

The protein resides in the cytoplasm. It carries out the reaction (R)-4'-phosphopantetheine + ATP + H(+) = 3'-dephospho-CoA + diphosphate. The protein operates within cofactor biosynthesis; coenzyme A biosynthesis; CoA from (R)-pantothenate: step 4/5. Functionally, reversibly transfers an adenylyl group from ATP to 4'-phosphopantetheine, yielding dephospho-CoA (dPCoA) and pyrophosphate. The protein is Phosphopantetheine adenylyltransferase of Klebsiella pneumoniae subsp. pneumoniae (strain ATCC 700721 / MGH 78578).